A 354-amino-acid chain; its full sequence is Uroporphyrinogen decarboxylase (354 aa).

Substrate is bound by residues 27 to 31 (RQAGR), Asp-77, Tyr-154, Thr-209, and His-327.

Belongs to the uroporphyrinogen decarboxylase family. As to quaternary structure, homodimer.

Its subcellular location is the cytoplasm. It carries out the reaction uroporphyrinogen III + 4 H(+) = coproporphyrinogen III + 4 CO2. Its pathway is porphyrin-containing compound metabolism; protoporphyrin-IX biosynthesis; coproporphyrinogen-III from 5-aminolevulinate: step 4/4. Its function is as follows. Catalyzes the decarboxylation of four acetate groups of uroporphyrinogen-III to yield coproporphyrinogen-III. This Histophilus somni (strain 2336) (Haemophilus somnus) protein is Uroporphyrinogen decarboxylase.